The chain runs to 469 residues: Adenosylhomocysteinase (469 aa).

3 residues coordinate substrate: threonine 63, aspartate 139, and glutamate 164. 165 to 167 (TTT) contributes to the NAD(+) binding site. Residues lysine 194 and aspartate 198 each contribute to the substrate site. NAD(+) is bound by residues asparagine 199, 228 to 233 (GYGDVG), glutamate 251, asparagine 300, 321 to 323 (IGH), and asparagine 375.

It belongs to the adenosylhomocysteinase family. Requires NAD(+) as cofactor.

It localises to the cytoplasm. The enzyme catalyses S-adenosyl-L-homocysteine + H2O = L-homocysteine + adenosine. It participates in amino-acid biosynthesis; L-homocysteine biosynthesis; L-homocysteine from S-adenosyl-L-homocysteine: step 1/1. Functionally, may play a key role in the regulation of the intracellular concentration of adenosylhomocysteine. In Pseudomonas putida (strain ATCC 700007 / DSM 6899 / JCM 31910 / BCRC 17059 / LMG 24140 / F1), this protein is Adenosylhomocysteinase.